A 294-amino-acid chain; its full sequence is 33 kDa chaperonin (294 aa).

2 cysteine pairs are disulfide-bonded: C231-C233 and C264-C267.

The protein belongs to the HSP33 family. Post-translationally, under oxidizing conditions two disulfide bonds are formed involving the reactive cysteines. Under reducing conditions zinc is bound to the reactive cysteines and the protein is inactive.

It localises to the cytoplasm. In terms of biological role, redox regulated molecular chaperone. Protects both thermally unfolding and oxidatively damaged proteins from irreversible aggregation. Plays an important role in the bacterial defense system toward oxidative stress. This is 33 kDa chaperonin from Aeromonas salmonicida (strain A449).